We begin with the raw amino-acid sequence, 376 residues long: MAISFRTLALLTLSVLLISISLGVVTATESQRNEGEVLTMYEQWLVENGKNYNGLGEKERRFKIFKDNLKRIEEHNSDPNRSYERGLNKFSDLTADEFQASYLGGKMEKKSLSDVAERYQYKEGDVLPDEVDWRERGAVVPRVKRQGECGSCWAFAATGAVEGINQITTGELVSLSEQELIDCDRGNDNFGCAGGGAVWAFEFIKENGGIVSDEVYGYTGEDTAACKAIEMKTTRVVTINGHEVVPVNDEMSLKKAVAYQPISVMISAANMSDYKSGVYKGACSNLWGDHNVLIVGYGTSSDEGDYWLIRNSWGPEWGEGGYLRLQRNFHEPTGKCAVAVAPVYPIKSNSSSHLLSPSVFKLVVLFVFQLISLALL.

The signal sequence occupies residues 1 to 27 (MAISFRTLALLTLSVLLISISLGVVTA). A propeptide spans 28–126 (TESQRNEGEV…ERYQYKEGDV (99 aa)) (activation peptide). N-linked (GlcNAc...) asparagine glycosylation is present at asparagine 80. 2 cysteine pairs are disulfide-bonded: cysteine 149-cysteine 192 and cysteine 183-cysteine 226. Cysteine 152 is a catalytic residue. A glycan (N-linked (GlcNAc...) asparagine) is linked at asparagine 270. A disulfide bridge connects residues cysteine 283 and cysteine 336. Catalysis depends on residues histidine 290 and asparagine 311. N-linked (GlcNAc...) asparagine glycosylation occurs at asparagine 349.

Belongs to the peptidase C1 family. In terms of tissue distribution, expressed in root hairs.

In terms of biological role, probable thiol protease. The polypeptide is Probable cysteine protease RDL3 (Arabidopsis thaliana (Mouse-ear cress)).